Reading from the N-terminus, the 514-residue chain is Beta-glucosidase 21 (514 aa).

The N-terminal stretch at 1-25 is a signal peptide; the sequence is MERPLHLLLVFLSSPWLLLLQGVSS. A beta-D-glucoside-binding residues include Gln-47 and His-147. The active-site Proton donor is Glu-193. An intrachain disulfide couples Cys-212 to Cys-220. 2 N-linked (GlcNAc...) asparagine glycosylation sites follow: Asn-219 and Asn-224. Residues Tyr-336 and Glu-406 each contribute to the a beta-D-glucoside site. The active-site Nucleophile is Glu-406. N-linked (GlcNAc...) asparagine glycosylation occurs at Asn-407. Trp-448 and Phe-465 together coordinate a beta-D-glucoside. Residue Asn-494 is glycosylated (N-linked (GlcNAc...) asparagine).

This sequence belongs to the glycosyl hydrolase 1 family.

The enzyme catalyses Hydrolysis of terminal, non-reducing beta-D-glucosyl residues with release of beta-D-glucose.. The protein is Beta-glucosidase 21 (BGLU21) of Oryza sativa subsp. japonica (Rice).